Consider the following 255-residue polypeptide: Zinc import ATP-binding protein ZnuC (255 aa).

Residues Val-5–Arg-220 form the ABC transporter domain.

The protein belongs to the ABC transporter superfamily. Zinc importer (TC 3.A.1.15.5) family. As to quaternary structure, the complex is composed of two ATP-binding proteins (ZnuC), two transmembrane proteins (ZnuB) and a solute-binding protein (ZnuA).

The protein localises to the cell inner membrane. It carries out the reaction Zn(2+)(out) + ATP(in) + H2O(in) = Zn(2+)(in) + ADP(in) + phosphate(in) + H(+)(in). In terms of biological role, part of the ABC transporter complex ZnuABC involved in zinc import. Responsible for energy coupling to the transport system. This is Zinc import ATP-binding protein ZnuC from Sodalis glossinidius (strain morsitans).